The following is a 399-amino-acid chain: Oligoribonuclease NrnB (399 aa).

Mn(2+) serves as cofactor. Co(2+) is required as a cofactor. It depends on Mg(2+) as a cofactor.

The protein resides in the cytoplasm. In terms of biological role, degrades RNA oligonucleotides with a length of 5 nucleotides in a 3'- to 5'-direction. Less active on shorter RNA oligonucleotides and on those with a length of 24 nucleotides. Prefers RNA oligonucleotides containing adenines rather than cytosines. This chain is Oligoribonuclease NrnB (nrnB), found in Bacillus subtilis (strain 168).